The primary structure comprises 386 residues: Succinate--CoA ligase [ADP-forming] subunit beta (386 aa).

An ATP-grasp domain is found at 9–244 (KEVLRKYGVV…LDEEDADEIE (236 aa)). Residues lysine 46, 53-55 (GRG), glutamate 99, alanine 102, and glutamate 107 each bind ATP. Residues asparagine 199 and aspartate 213 each coordinate Mg(2+). Substrate-binding positions include asparagine 264 and 321–323 (GIM).

Belongs to the succinate/malate CoA ligase beta subunit family. Heterotetramer of two alpha and two beta subunits. Mg(2+) is required as a cofactor.

The catalysed reaction is succinate + ATP + CoA = succinyl-CoA + ADP + phosphate. The enzyme catalyses GTP + succinate + CoA = succinyl-CoA + GDP + phosphate. The protein operates within carbohydrate metabolism; tricarboxylic acid cycle; succinate from succinyl-CoA (ligase route): step 1/1. In terms of biological role, succinyl-CoA synthetase functions in the citric acid cycle (TCA), coupling the hydrolysis of succinyl-CoA to the synthesis of either ATP or GTP and thus represents the only step of substrate-level phosphorylation in the TCA. The beta subunit provides nucleotide specificity of the enzyme and binds the substrate succinate, while the binding sites for coenzyme A and phosphate are found in the alpha subunit. The sequence is that of Succinate--CoA ligase [ADP-forming] subunit beta from Azoarcus sp. (strain BH72).